The chain runs to 33 residues: Cytochrome c oxidase subunit 5B liver, mitochondrial (33 aa).

This sequence belongs to the cytochrome c oxidase subunit 5B family. As to quaternary structure, component of the cytochrome c oxidase (complex IV, CIV), a multisubunit enzyme composed of 14 subunits. The complex is composed of a catalytic core of 3 subunits MT-CO1, MT-CO2 and MT-CO3, encoded in the mitochondrial DNA, and 11 supernumerary subunits COX4I, COX5A, COX5B, COX6A, COX6B, COX6C, COX7A, COX7B, COX7C, COX8 and NDUFA4, which are encoded in the nuclear genome. The complex exists as a monomer or a dimer and forms supercomplexes (SCs) in the inner mitochondrial membrane with NADH-ubiquinone oxidoreductase (complex I, CI) and ubiquinol-cytochrome c oxidoreductase (cytochrome b-c1 complex, complex III, CIII), resulting in different assemblies (supercomplex SCI(1)III(2)IV(1) and megacomplex MCI(2)III(2)IV(2)).

Its subcellular location is the mitochondrion inner membrane. Its pathway is energy metabolism; oxidative phosphorylation. Functionally, component of the cytochrome c oxidase, the last enzyme in the mitochondrial electron transport chain which drives oxidative phosphorylation. The respiratory chain contains 3 multisubunit complexes succinate dehydrogenase (complex II, CII), ubiquinol-cytochrome c oxidoreductase (cytochrome b-c1 complex, complex III, CIII) and cytochrome c oxidase (complex IV, CIV), that cooperate to transfer electrons derived from NADH and succinate to molecular oxygen, creating an electrochemical gradient over the inner membrane that drives transmembrane transport and the ATP synthase. Cytochrome c oxidase is the component of the respiratory chain that catalyzes the reduction of oxygen to water. Electrons originating from reduced cytochrome c in the intermembrane space (IMS) are transferred via the dinuclear copper A center (CU(A)) of subunit 2 and heme A of subunit 1 to the active site in subunit 1, a binuclear center (BNC) formed by heme A3 and copper B (CU(B)). The BNC reduces molecular oxygen to 2 water molecules using 4 electrons from cytochrome c in the IMS and 4 protons from the mitochondrial matrix. This is Cytochrome c oxidase subunit 5B liver, mitochondrial from Oncorhynchus mykiss (Rainbow trout).